A 168-amino-acid chain; its full sequence is Protein-export protein SecB (168 aa).

This sequence belongs to the SecB family. As to quaternary structure, homotetramer, a dimer of dimers. One homotetramer interacts with 1 SecA dimer.

Its subcellular location is the cytoplasm. In terms of biological role, one of the proteins required for the normal export of preproteins out of the cell cytoplasm. It is a molecular chaperone that binds to a subset of precursor proteins, maintaining them in a translocation-competent state. It also specifically binds to its receptor SecA. This Rhizobium meliloti (strain 1021) (Ensifer meliloti) protein is Protein-export protein SecB.